The chain runs to 113 residues: Hydrogenase maturation factor HypA (113 aa).

A Ni(2+)-binding site is contributed by H2. Residues C73, C76, C89, and C92 each contribute to the Zn(2+) site.

This sequence belongs to the HypA/HybF family.

Functionally, involved in the maturation of [NiFe] hydrogenases. Required for nickel insertion into the metal center of the hydrogenase. This is Hydrogenase maturation factor HypA from Rhodopseudomonas palustris (strain BisB5).